The primary structure comprises 360 residues: Aminomethyltransferase (360 aa).

It belongs to the GcvT family. The glycine cleavage system is composed of four proteins: P, T, L and H.

The catalysed reaction is N(6)-[(R)-S(8)-aminomethyldihydrolipoyl]-L-lysyl-[protein] + (6S)-5,6,7,8-tetrahydrofolate = N(6)-[(R)-dihydrolipoyl]-L-lysyl-[protein] + (6R)-5,10-methylene-5,6,7,8-tetrahydrofolate + NH4(+). The glycine cleavage system catalyzes the degradation of glycine. The chain is Aminomethyltransferase from Legionella pneumophila (strain Lens).